We begin with the raw amino-acid sequence, 160 residues long: uncharacterized protein (160 aa).

The region spanning 7–151 is the N-acetyltransferase domain; it reads LLINYKTLEE…NPLIWHPDMD (145 aa).

This is an uncharacterized protein from Bacillus subtilis (strain 168).